A 1355-amino-acid polypeptide reads, in one-letter code: DNA-directed RNA polymerase subunit beta' (1355 aa).

Zn(2+) contacts are provided by Cys-219, Cys-293, Cys-300, and Cys-303. A disordered region spans residues 1331–1355 (AEVEVDDEVDDDYEDDDEDDDDYED).

This sequence belongs to the RNA polymerase beta' chain family. RpoC2 subfamily. In cyanobacteria the RNAP catalytic core is composed of 2 alpha, 1 beta, 1 beta', 1 gamma and 1 omega subunit. When a sigma factor is associated with the core the holoenzyme is formed, which can initiate transcription. It depends on Zn(2+) as a cofactor.

The catalysed reaction is RNA(n) + a ribonucleoside 5'-triphosphate = RNA(n+1) + diphosphate. Functionally, DNA-dependent RNA polymerase catalyzes the transcription of DNA into RNA using the four ribonucleoside triphosphates as substrates. The protein is DNA-directed RNA polymerase subunit beta' of Nostoc sp. (strain PCC 7120 / SAG 25.82 / UTEX 2576).